A 436-amino-acid polypeptide reads, in one-letter code: Adenylosuccinate synthetase (436 aa).

Residues Gly-12–Lys-18 and Gly-40–Thr-42 contribute to the GTP site. Asp-13 (proton acceptor) is an active-site residue. Residues Asp-13 and Gly-40 each contribute to the Mg(2+) site. Residues Asp-13–Lys-16, Asn-38–His-41, Thr-128, Arg-142, Gln-223, Thr-238, and Arg-302 each bind IMP. Catalysis depends on His-41, which acts as the Proton donor. Thr-298–Arg-304 lines the substrate pocket. GTP-binding positions include Arg-304, Lys-330–Asp-332, and Ser-412–Gly-414.

Belongs to the adenylosuccinate synthetase family. In terms of assembly, homodimer. The cofactor is Mg(2+).

The protein localises to the cytoplasm. It catalyses the reaction IMP + L-aspartate + GTP = N(6)-(1,2-dicarboxyethyl)-AMP + GDP + phosphate + 2 H(+). The protein operates within purine metabolism; AMP biosynthesis via de novo pathway; AMP from IMP: step 1/2. Functionally, plays an important role in the de novo pathway of purine nucleotide biosynthesis. Catalyzes the first committed step in the biosynthesis of AMP from IMP. This chain is Adenylosuccinate synthetase, found in Prochlorococcus marinus (strain MIT 9215).